The primary structure comprises 151 residues: MATLEQNLQEMLQDAVEDLGCELWGIECQRMGRFMTVRLFIDKDGGVTVDDCADVSRQVSAILDVEDPIADKYNLEVSSPGLDRPLFTLPQFERYIGQDIAVHLRIPVMERRKWQGKLERIEKDMITLIVDDQEQILVFGNIQKANVVAKF.

It belongs to the RimP family.

It is found in the cytoplasm. Its function is as follows. Required for maturation of 30S ribosomal subunits. In Haemophilus influenzae (strain PittEE), this protein is Ribosome maturation factor RimP.